The sequence spans 260 residues: tRNA pseudouridine synthase A (260 aa).

The active-site Nucleophile is aspartate 52. Tyrosine 110 contacts substrate.

Belongs to the tRNA pseudouridine synthase TruA family. In terms of assembly, homodimer.

It catalyses the reaction uridine(38/39/40) in tRNA = pseudouridine(38/39/40) in tRNA. Formation of pseudouridine at positions 38, 39 and 40 in the anticodon stem and loop of transfer RNAs. In Spiroplasma kunkelii, this protein is tRNA pseudouridine synthase A.